The sequence spans 497 residues: MKKATVGAAVIGAATVCAVAALIVNHRMRKSSKWARAMAILREFEEKCGTPDAKLKQVADAMTVEMHAGLASEGGSKLKMLITYVDNLPTGDEAGVFYALDLGGTNFRVLRVQLGGKDGGIVHQEFAEASIPPNLMVGTSEALFDYIAAELAKFVNEEGEKFQQPPGKQRELGFTFSFPVMQTSINSGTIMRWTKGFSIDDAVGQDVVGELAKAMKRKGVDMRVSALVNDTVGTLAGGKYTHNDVAVAVILGTGTNAAYVERVQAIPKWHGPVPKSGEMVINMEWGNFRSSHLPLTQYDHALDTNSLNPGDQIFEKMTSGMYLGEILRRVLLRVAEEAGIFGDEVPPKLKSPFVLRTPDMSAMHHDASSDLRVVGDKLKDILEISNTSLKTRRLVIELCNIVATRGARLAAAGVLGILKKMGRDTPRQGGLEKTVVAMDGGLYEHYTEYRMCLENTLKELLGDELATSIVFEHSNDGSGIGAALLAASNSMYLEDKS.

The helical transmembrane segment at 4-24 threads the bilayer; sequence ATVGAAVIGAATVCAVAALIV. The Hexokinase domain maps to 35–487; it reads ARAMAILREF…SGIGAALLAA (453 aa). The segment at 90–228 is hexokinase small subdomain; that stretch reads TGDEAGVFYA…GVDMRVSALV (139 aa). ADP-binding residues include Gly104, Thr105, and Asn106. D-glucose-binding residues include Thr194, Lys195, Asn229, and Asp230. Positions 229-476 are hexokinase large subdomain; it reads NDTVGTLAGG…TSIVFEHSND (248 aa). Residue Thr253 coordinates ADP. Asn256, Glu284, and Glu315 together coordinate D-glucose. Gly441 contacts ADP.

The protein belongs to the hexokinase family.

The protein localises to the plastid. The protein resides in the chloroplast outer membrane. The catalysed reaction is a D-hexose + ATP = a D-hexose 6-phosphate + ADP + H(+). It carries out the reaction D-fructose + ATP = D-fructose 6-phosphate + ADP + H(+). The enzyme catalyses D-glucose + ATP = D-glucose 6-phosphate + ADP + H(+). It functions in the pathway carbohydrate metabolism; hexose metabolism. The protein operates within carbohydrate degradation; glycolysis; D-glyceraldehyde 3-phosphate and glycerone phosphate from D-glucose: step 1/4. Fructose and glucose phosphorylating enzyme. This is Hexokinase-1 (HXK1) from Nicotiana tabacum (Common tobacco).